The chain runs to 163 residues: MTKVLLGFMGVGKTTVSKHLSMHCKDMDAIIEAKIGMSIAAFFEQHGEIAFRTIESQVLKDLLFTNDNSVIVTGGGVVVLQENRQLLRKNHQHNILLVASFETLYQRLKHDKKSQRPLFLKYSKEAFYEFYQQRMVFYEGLSDLVIRVDHRTPEEVANIIEGY.

Residue 10 to 15 (GVGKTT) participates in ATP binding. A Mg(2+)-binding site is contributed by threonine 14. The substrate site is built by aspartate 28, arginine 52, and glycine 75. Arginine 116 lines the ATP pocket. Position 134 (arginine 134) interacts with substrate. ATP is bound at residue arginine 151.

Belongs to the shikimate kinase family. In terms of assembly, monomer. Mg(2+) is required as a cofactor.

The protein localises to the cytoplasm. It carries out the reaction shikimate + ATP = 3-phosphoshikimate + ADP + H(+). Its pathway is metabolic intermediate biosynthesis; chorismate biosynthesis; chorismate from D-erythrose 4-phosphate and phosphoenolpyruvate: step 5/7. Catalyzes the specific phosphorylation of the 3-hydroxyl group of shikimic acid using ATP as a cosubstrate. The protein is Shikimate kinase of Streptococcus pyogenes serotype M4 (strain MGAS10750).